The chain runs to 304 residues: Opsin-1 (304 aa).

Residues 1–45 (MIHPEQVADMLRPTTSTTSSHVPGPVPTVVPTPTEYQTLGETGHR) lie on the Extracellular side of the membrane. Residues 46–66 (TLWVTFALMVLSSGIFALLSW) form a helical membrane-spanning segment. The chain crosses the membrane as a helical span at residues 74 to 94 (LFHVITTLITVVASLSYFAMA). A helical membrane pass occupies residues 129-149 (YVDWALTTPLLLLELCLLAGV). Residues 154–174 (TLMAIVADVIMVLCGLFAALG) form a helical membrane-spanning segment. A helical membrane pass occupies residues 183-203 (WGWYTIGCFSYLFVIWHVALH). The chain crosses the membrane as a helical span at residues 219 to 239 (FTGLAVFALLLWTAYPIIWGI). The chain crosses the membrane as a helical span at residues 252–272 (ILIYTVLDLLAKPVFGFWLLL). Lys263 carries the N6-(retinylidene)lysine modification. The Cytoplasmic portion of the chain corresponds to 273–304 (SHRAMPETNIDLPGYWSHGLATEGRIRIGEED).

Belongs to the archaeal/bacterial/fungal opsin family. Binds all-trans retinal via a protonated Schiff base linkage.

Its subcellular location is the membrane. Could facilitate a sensory photoresponse. This is Opsin-1 (nop-1) from Neurospora crassa (strain ATCC 24698 / 74-OR23-1A / CBS 708.71 / DSM 1257 / FGSC 987).